The sequence spans 646 residues: NADP-dependent malic enzyme 4, chloroplastic (646 aa).

The N-terminal 74 residues, 1 to 74 (MISLTPSLFL…LETSAADIVP (74 aa)), are a transit peptide targeting the chloroplast. Tyr-194 acts as the Proton donor in catalysis. Arg-247 contributes to the NADP(+) binding site. Lys-265 serves as the catalytic Proton acceptor. The a divalent metal cation site is built by Glu-337, Asp-338, and Asp-361. NADP(+)-binding positions include Asp-361, 390–406 (LFLGAGEAGTGIAELIA), and Asn-502.

It belongs to the malic enzymes family. As to quaternary structure, homodimer and homotetramer. The cofactor is Mg(2+). Mn(2+) is required as a cofactor. Expressed in leaves, stems, flowers and roots, mainly in vascular system. In roots, present in the stele, including the vascular tissue and the pericycle, mainly at emerging lateral roots and at root tips.

The protein resides in the plastid. It is found in the chloroplast. The enzyme catalyses (S)-malate + NADP(+) = pyruvate + CO2 + NADPH. The catalysed reaction is oxaloacetate + H(+) = pyruvate + CO2. It functions in the pathway photosynthesis; C3 acid pathway. In terms of biological role, the chloroplastic ME isoform decarboxylates malate shuttled from neighboring mesophyll cells. The CO(2) released is then refixed by ribulose-bisphosphate carboxylase. This pathway eliminates the photorespiratory loss of CO(2) that occurs in most plants. This chain is NADP-dependent malic enzyme 4, chloroplastic (NADP-ME4), found in Arabidopsis thaliana (Mouse-ear cress).